The sequence spans 643 residues: Macrolide export ATP-binding/permease protein MacB (643 aa).

Residues 4 to 242 (IEIKELNRYF…VNNQSKAKSR (239 aa)) form the ABC transporter domain. 40–47 (GQSGSGKS) contacts ATP. 4 helical membrane passes run 269 to 289 (LLTM…VALG), 523 to 543 (IAFI…LVSV), 572 to 592 (ILIC…IGGI), and 603 to 623 (VFST…GVIF).

The protein belongs to the ABC transporter superfamily. Macrolide exporter (TC 3.A.1.122) family. Homodimer. Part of the tripartite efflux system MacAB-TolC, which is composed of an inner membrane transporter, MacB, a periplasmic membrane fusion protein, MacA, and an outer membrane component, TolC. The complex forms a large protein conduit and can translocate molecules across both the inner and outer membranes. Interacts with MacA.

The protein resides in the cell inner membrane. Its function is as follows. Part of the tripartite efflux system MacAB-TolC. MacB is a non-canonical ABC transporter that contains transmembrane domains (TMD), which form a pore in the inner membrane, and an ATP-binding domain (NBD), which is responsible for energy generation. Confers resistance against macrolides. The sequence is that of Macrolide export ATP-binding/permease protein MacB from Mannheimia succiniciproducens (strain KCTC 0769BP / MBEL55E).